Consider the following 39-residue polypeptide: Colipase (39 aa).

Cystine bridges form between Cys-16–Cys-27 and Cys-22–Cys-38.

Belongs to the colipase family. In terms of assembly, forms a 1:1 stoichiometric complex with pancreatic lipase. Expressed by the pancreas.

The protein localises to the secreted. Its function is as follows. Colipase is a cofactor of pancreatic lipase. It allows the lipase to anchor itself to the lipid-water interface. Without colipase the enzyme is washed off by bile salts, which have an inhibitory effect on the lipase. This is Colipase from Squalus acanthias (Spiny dogfish).